The sequence spans 2290 residues: Armadillo repeat-containing X-linked protein 4 (2290 aa).

Residues 7–24 form a helical membrane-spanning segment; sequence VGWVTAGLVIWAGTCYYI. Disordered regions lie at residues 517 to 549, 564 to 583, 967 to 988, 1014 to 1087, 1302 to 1430, 1521 to 1715, 1911 to 1931, and 1954 to 1973; these read QGEA…TCTQ, SRVD…TKAD, KVRG…VGSA, AVPK…ACRK, GSWA…ANSG, GSWG…RSED, SNTF…AGDN, and NENT…KSSE. Positions 526-536 are enriched in basic residues; that stretch reads GKARGKAKAKC. Residues 1073 to 1087 show a composition bias toward polar residues; sequence TSESEGGSGTQACRK. Gly residues-rich tracts occupy residues 1328–1341 and 1403–1414; these read SWAG…GGSM and AGAGGQAGGGSK. Residues 1419 to 1430 show a composition bias toward polar residues; the sequence is DQSSGRSWANSG. The segment covering 1521–1535 has biased composition (gly residues); the sequence is GSWGGASGQDVGGSR. Residues 1537-1558 are compositionally biased toward polar residues; sequence GPTNQSSAGSWDSPGSQVSGSC. 2 stretches are compositionally biased toward gly residues: residues 1581–1598 and 1609–1623; these read IGGG…GGSR and GSWG…GGAR. A compositionally biased stretch (polar residues) spans 1628–1645; it reads DQSSGGSWAGTGNQSSGR. Residues 1674 to 1687 are compositionally biased toward low complexity; that stretch reads GAGSQASGESWAGS. ARM repeat units lie at residues 2031–2071, 2073–2112, 2153–2192, and 2194–2234; these read RCKH…NSAD, SYSH…NISV, ITSE…NFSK, and PSMT…NINY.

It belongs to the eutherian X-chromosome-specific Armcx family.

It is found in the membrane. In Homo sapiens (Human), this protein is Armadillo repeat-containing X-linked protein 4 (ARMCX4).